The primary structure comprises 417 residues: Imidazolonepropionase (417 aa).

Fe(3+) contacts are provided by His-80 and His-82. His-80 and His-82 together coordinate Zn(2+). 4-imidazolone-5-propanoate-binding residues include Arg-89, Tyr-152, and His-187. Tyr-152 serves as a coordination point for N-formimidoyl-L-glutamate. His-252 is a Fe(3+) binding site. A Zn(2+)-binding site is contributed by His-252. Residue Glu-255 participates in 4-imidazolone-5-propanoate binding. Asp-326 serves as a coordination point for Fe(3+). Residue Asp-326 coordinates Zn(2+). The N-formimidoyl-L-glutamate site is built by Asn-328 and Gly-330. Ser-331 contacts 4-imidazolone-5-propanoate.

Belongs to the metallo-dependent hydrolases superfamily. HutI family. It depends on Zn(2+) as a cofactor. Requires Fe(3+) as cofactor.

It is found in the cytoplasm. It carries out the reaction 4-imidazolone-5-propanoate + H2O = N-formimidoyl-L-glutamate. Its pathway is amino-acid degradation; L-histidine degradation into L-glutamate; N-formimidoyl-L-glutamate from L-histidine: step 3/3. Its function is as follows. Catalyzes the hydrolytic cleavage of the carbon-nitrogen bond in imidazolone-5-propanoate to yield N-formimidoyl-L-glutamate. It is the third step in the universal histidine degradation pathway. This is Imidazolonepropionase from Bacteroides fragilis (strain ATCC 25285 / DSM 2151 / CCUG 4856 / JCM 11019 / LMG 10263 / NCTC 9343 / Onslow / VPI 2553 / EN-2).